The sequence spans 515 residues: Putative asparagine synthetase [glutamine-hydrolyzing] 2 (515 aa).

Residue Cys2 is the For GATase activity of the active site. The region spanning 2 to 229 (CGINGIIRFG…ARQNLIFDLD (228 aa)) is the Glutamine amidotransferase type-2 domain. Residues 52-56 (RLAIL), 92-94 (NGE), and Asp114 each bind L-glutamine. Residues Ile306 and 378-379 (SG) each bind ATP.

It belongs to the asparagine synthetase family.

It catalyses the reaction L-aspartate + L-glutamine + ATP + H2O = L-asparagine + L-glutamate + AMP + diphosphate + H(+). The protein operates within amino-acid biosynthesis; L-asparagine biosynthesis; L-asparagine from L-aspartate (L-Gln route): step 1/1. The polypeptide is Putative asparagine synthetase [glutamine-hydrolyzing] 2 (Methanocaldococcus jannaschii (strain ATCC 43067 / DSM 2661 / JAL-1 / JCM 10045 / NBRC 100440) (Methanococcus jannaschii)).